The sequence spans 470 residues: MTTSQLAKKGEAWSARFSEPMSDLVKRYTASVFFDKRLALFDIQGSLAHAAMLAKQGIIAEADRAEIERGMAQIKGEIEAGGFEWKLDLEDVHLNIEARLTALVGDAGKRLHTGRSRNDQVATDIRLWLRSEIDNIIALLGALRGSLLDLADQNADTILPGFTHLQVAQPVTFGHHLLAYVEMFTRDAERMADCRKRVNRLPLGAAALAGTSYPIDREFVAQQLGFDGVCRNSLDAVSDRDFAIEFCAAAALVMTHVSRFSEELVLWMSPRVGFIDIADRFCTGSSIMPQKKNPDVPELARGKTGRVNGHLIGLLTLMKGQPLAYNKDNQEDKEPLFDTVDTVVDTLRIFADMVPGITVKPEAMRAAALQGYATATDLADYLVKKGLPFRDAHEAVAHAVRACDSRNCDLADLTVAELREVSGLGDKSALIGDDVHTVLTLEGSVAARNHIGGTAPDQVRAAIAAARAAL.

Belongs to the lyase 1 family. Argininosuccinate lyase subfamily.

It localises to the cytoplasm. The catalysed reaction is 2-(N(omega)-L-arginino)succinate = fumarate + L-arginine. It functions in the pathway amino-acid biosynthesis; L-arginine biosynthesis; L-arginine from L-ornithine and carbamoyl phosphate: step 3/3. This Cupriavidus pinatubonensis (strain JMP 134 / LMG 1197) (Cupriavidus necator (strain JMP 134)) protein is Argininosuccinate lyase.